A 314-amino-acid polypeptide reads, in one-letter code: Vacuolar membrane protein VL3_4134 (314 aa).

Positions 32-60 (KPTSSVVSETSSKSLPSLTSSAFSTSSGA) are disordered. Residues 93–113 (VYIAVGAVIGAIFISILIWWL) traverse the membrane as a helical segment. Phosphoserine occurs at positions 148, 254, and 274. The disordered stretch occupies residues 240–309 (EERKLNLNRP…PSMFLDDVLN (70 aa)). Positions 254–269 (SPERKEKKINSMEGYH) are enriched in basic and acidic residues.

This sequence belongs to the PRM5 family.

Its subcellular location is the vacuole membrane. In Saccharomyces cerevisiae (strain Zymaflore VL3) (Baker's yeast), this protein is Vacuolar membrane protein VL3_4134.